The following is a 459-amino-acid chain: Putrescine aminotransferase (459 aa).

Pyridoxal 5'-phosphate is bound by residues 150 to 151 (GT) and glutamine 274. N6-(pyridoxal phosphate)lysine is present on lysine 300. Threonine 332 is a pyridoxal 5'-phosphate binding site.

The protein belongs to the class-III pyridoxal-phosphate-dependent aminotransferase family. Putrescine aminotransferase subfamily. Pyridoxal 5'-phosphate serves as cofactor.

It carries out the reaction an alkane-alpha,omega-diamine + 2-oxoglutarate = an omega-aminoaldehyde + L-glutamate. The enzyme catalyses putrescine + 2-oxoglutarate = 1-pyrroline + L-glutamate + H2O. The catalysed reaction is cadaverine + 2-oxoglutarate = 5-aminopentanal + L-glutamate. It participates in amine and polyamine degradation; putrescine degradation; 4-aminobutanal from putrescine (transaminase route): step 1/1. Its function is as follows. Catalyzes the aminotransferase reaction from putrescine to 2-oxoglutarate, leading to glutamate and 4-aminobutanal, which spontaneously cyclizes to form 1-pyrroline. This is the first step in one of two pathways for putrescine degradation, where putrescine is converted into 4-aminobutanoate (gamma-aminobutyrate or GABA) via 4-aminobutanal. Also functions as a cadaverine transaminase in a a L-lysine degradation pathway to succinate that proceeds via cadaverine, glutarate and L-2-hydroxyglutarate. In Escherichia coli (strain ATCC 8739 / DSM 1576 / NBRC 3972 / NCIMB 8545 / WDCM 00012 / Crooks), this protein is Putrescine aminotransferase.